We begin with the raw amino-acid sequence, 289 residues long: ATP synthase mitochondrial F1 complex assembly factor 2 (289 aa).

The transit peptide at 1 to 40 (MWRSCLRLRDGGRRLLNRPAGGPSASMSPGPTIPSPARAY) directs the protein to the mitochondrion. Residues 13-40 (RRLLNRPAGGPSASMSPGPTIPSPARAY) form a disordered region. Residue Lys133 is modified to N6-succinyllysine.

This sequence belongs to the ATP12 family. As to quaternary structure, interacts with ATP5F1B; involved in the assembly of the F1 component of the mitochondrial ATP synthase (ATPase). Interacts with FMC1. As to expression, widely expressed.

Its subcellular location is the mitochondrion inner membrane. Functionally, plays a role in the assembly of the F1 component of the mitochondrial ATP synthase (ATPase). This chain is ATP synthase mitochondrial F1 complex assembly factor 2, found in Homo sapiens (Human).